The primary structure comprises 215 residues: Kunitz trypsin inhibitor 2 (215 aa).

The N-terminal stretch at 1 to 23 (MKNPSVISFLIILLFAATICTHG) is a signal peptide. C67 and C114 are joined by a disulfide. Residue N145 is glycosylated (N-linked (GlcNAc...) asparagine).

The protein belongs to the protease inhibitor I3 (leguminous Kunitz-type inhibitor) family. As to quaternary structure, interacts with RD21A. Interacts with RD21B and RD21C. In terms of tissue distribution, expressed in vascular bundles of the carpels, the transmitting tract of the style and septum epidermis. Expressed in etiolated seedlings.

The protein localises to the secreted. It localises to the cell wall. The protein resides in the extracellular space. It is found in the apoplast. Its subcellular location is the endoplasmic reticulum. Functionally, water-soluble and chlorophyll-binding protein that probably does not function as a chloroplast chlorophyll carrier and is not involved in photosynthesis. Involved in the control of cell death in the transmitting tract and septum epidermis during flower development. Binds and inhibits the activity of the cysteine protease RD21A as a pro-death protein. May play a role in herbivore resistance activation during seedling greening. The protein is Kunitz trypsin inhibitor 2 of Arabidopsis thaliana (Mouse-ear cress).